The following is a 77-amino-acid chain: Large ribosomal subunit protein uL29 (77 aa).

It belongs to the universal ribosomal protein uL29 family.

This is Large ribosomal subunit protein uL29 from Gluconobacter oxydans (strain 621H) (Gluconobacter suboxydans).